The following is a 734-amino-acid chain: Photosystem I P700 chlorophyll a apoprotein A2 (734 aa).

8 helical membrane passes run 46 to 69 (IFAS…FHVA), 135 to 158 (LYTG…LHLQ), 175 to 199 (LNHH…HVAI), 273 to 291 (IAHH…GHMY), 330 to 353 (LHFQ…QHMY), 369 to 395 (AALY…IFFI), 417 to 439 (AIIS…LYVH), and 517 to 535 (FLVH…LILV). 2 residues coordinate [4Fe-4S] cluster: Cys-559 and Cys-568. The next 2 membrane-spanning stretches (helical) occupy residues 575–596 (AFYL…YWHW) and 643–665 (LSVW…MFLI). His-654, Met-662, and Tyr-670 together coordinate chlorophyll a. Trp-671 contributes to the phylloquinone binding site. A helical transmembrane segment spans residues 707–727 (LVGLAHFSVGYIFTYAAFLIA).

This sequence belongs to the PsaA/PsaB family. The PsaA/B heterodimer binds the P700 chlorophyll special pair and subsequent electron acceptors. PSI consists of a core antenna complex that captures photons, and an electron transfer chain that converts photonic excitation into a charge separation. The eukaryotic PSI reaction center is composed of at least 11 subunits. It depends on P700 is a chlorophyll a/chlorophyll a' dimer, A0 is one or more chlorophyll a, A1 is one or both phylloquinones and FX is a shared 4Fe-4S iron-sulfur center. as a cofactor.

The protein localises to the plastid. It is found in the chloroplast thylakoid membrane. It catalyses the reaction reduced [plastocyanin] + hnu + oxidized [2Fe-2S]-[ferredoxin] = oxidized [plastocyanin] + reduced [2Fe-2S]-[ferredoxin]. Its function is as follows. PsaA and PsaB bind P700, the primary electron donor of photosystem I (PSI), as well as the electron acceptors A0, A1 and FX. PSI is a plastocyanin-ferredoxin oxidoreductase, converting photonic excitation into a charge separation, which transfers an electron from the donor P700 chlorophyll pair to the spectroscopically characterized acceptors A0, A1, FX, FA and FB in turn. Oxidized P700 is reduced on the lumenal side of the thylakoid membrane by plastocyanin. This is Photosystem I P700 chlorophyll a apoprotein A2 from Zygnema circumcarinatum (Green alga).